We begin with the raw amino-acid sequence, 120 residues long: NAD(P)H-quinone oxidoreductase subunit 3, chloroplastic (120 aa).

Helical transmembrane passes span 9 to 29 (IFWT…WISG), 64 to 84 (MFAL…PWAM), and 88 to 108 (VLGV…VVGL).

Belongs to the complex I subunit 3 family. In terms of assembly, NDH is composed of at least 16 different subunits, 5 of which are encoded in the nucleus.

The protein localises to the plastid. The protein resides in the chloroplast thylakoid membrane. The catalysed reaction is a plastoquinone + NADH + (n+1) H(+)(in) = a plastoquinol + NAD(+) + n H(+)(out). It catalyses the reaction a plastoquinone + NADPH + (n+1) H(+)(in) = a plastoquinol + NADP(+) + n H(+)(out). NDH shuttles electrons from NAD(P)H:plastoquinone, via FMN and iron-sulfur (Fe-S) centers, to quinones in the photosynthetic chain and possibly in a chloroplast respiratory chain. The immediate electron acceptor for the enzyme in this species is believed to be plastoquinone. Couples the redox reaction to proton translocation, and thus conserves the redox energy in a proton gradient. This Agrostis stolonifera (Creeping bentgrass) protein is NAD(P)H-quinone oxidoreductase subunit 3, chloroplastic.